The sequence spans 202 residues: 3-isopropylmalate dehydratase small subunit (202 aa).

This sequence belongs to the LeuD family. LeuD type 1 subfamily. In terms of assembly, heterodimer of LeuC and LeuD.

The catalysed reaction is (2R,3S)-3-isopropylmalate = (2S)-2-isopropylmalate. The protein operates within amino-acid biosynthesis; L-leucine biosynthesis; L-leucine from 3-methyl-2-oxobutanoate: step 2/4. Functionally, catalyzes the isomerization between 2-isopropylmalate and 3-isopropylmalate, via the formation of 2-isopropylmaleate. In Caulobacter vibrioides (strain ATCC 19089 / CIP 103742 / CB 15) (Caulobacter crescentus), this protein is 3-isopropylmalate dehydratase small subunit.